The primary structure comprises 469 residues: ATP synthase subunit beta (469 aa).

Residue 155-162 (GGAGCGKT) coordinates ATP.

Belongs to the ATPase alpha/beta chains family. F-type ATPases have 2 components, CF(1) - the catalytic core - and CF(0) - the membrane proton channel. CF(1) has five subunits: alpha(3), beta(3), gamma(1), delta(1), epsilon(1). CF(0) has three main subunits: a(1), b(2) and c(9-12). The alpha and beta chains form an alternating ring which encloses part of the gamma chain. CF(1) is attached to CF(0) by a central stalk formed by the gamma and epsilon chains, while a peripheral stalk is formed by the delta and b chains.

The protein localises to the cell inner membrane. It carries out the reaction ATP + H2O + 4 H(+)(in) = ADP + phosphate + 5 H(+)(out). In terms of biological role, produces ATP from ADP in the presence of a proton gradient across the membrane. The catalytic sites are hosted primarily by the beta subunits. The sequence is that of ATP synthase subunit beta from Syntrophus aciditrophicus (strain SB).